Consider the following 122-residue polypeptide: Basic phospholipase A2 LmTX-I (122 aa).

6 disulfides stabilise this stretch: C26–C115, C28–C44, C43–C95, C49–C122, C50–C88, and C75–C86. Ca(2+) contacts are provided by Y27, G29, and G31. H47 is a catalytic residue. D48 contacts Ca(2+). Residue D89 is part of the active site.

As to quaternary structure, monomer. Ca(2+) is required as a cofactor. Expressed by the venom gland.

Its subcellular location is the secreted. The enzyme catalyses a 1,2-diacyl-sn-glycero-3-phosphocholine + H2O = a 1-acyl-sn-glycero-3-phosphocholine + a fatty acid + H(+). Its activity is regulated as follows. Inhibited by Mn(2+), Mg(2+), Zn(2+) and Cu(2+). Snake venom phospholipase A2 (PLA2) that displays neurotoxic and myotoxic activities. Induces inflammatory edema by mechanisms involving mast cell activation and arachidonic acid metabolites. Increases plasma creatine kinase activity. PLA2 catalyzes the calcium-dependent hydrolysis of the 2-acyl groups in 3-sn-phosphoglycerides. This is Basic phospholipase A2 LmTX-I from Lachesis muta muta (Bushmaster).